We begin with the raw amino-acid sequence, 533 residues long: Chromosomal replication initiator protein DnaA (533 aa).

The segment at 1 to 72 (MNDFWQHCSA…DLARDFWNAP (72 aa)) is domain I, interacts with DnaA modulators. Residues 72–196 (PIEVQFVLDP…EAADSMYERS (125 aa)) are domain II. The disordered stretch occupies residues 83-113 (AGQRSPAGATPLAPRAPLPSANPAPVAPGPA). The span at 96 to 110 (PRAPLPSANPAPVAP) shows a compositional bias: pro residues. Positions 197–413 (KLNPVLTFDN…GALRKILAYS (217 aa)) are domain III, AAA+ region. ATP-binding residues include G241, G243, K244, and T245. The segment at 414–533 (KFHGREITIE…LHVLEQTLKG (120 aa)) is domain IV, binds dsDNA.

This sequence belongs to the DnaA family. As to quaternary structure, oligomerizes as a right-handed, spiral filament on DNA at oriC.

The protein localises to the cytoplasm. Plays an essential role in the initiation and regulation of chromosomal replication. ATP-DnaA binds to the origin of replication (oriC) to initiate formation of the DNA replication initiation complex once per cell cycle. Binds the DnaA box (a 9 base pair repeat at the origin) and separates the double-stranded (ds)DNA. Forms a right-handed helical filament on oriC DNA; dsDNA binds to the exterior of the filament while single-stranded (ss)DNA is stabiized in the filament's interior. The ATP-DnaA-oriC complex binds and stabilizes one strand of the AT-rich DNA unwinding element (DUE), permitting loading of DNA polymerase. After initiation quickly degrades to an ADP-DnaA complex that is not apt for DNA replication. Binds acidic phospholipids. This Burkholderia mallei (strain SAVP1) protein is Chromosomal replication initiator protein DnaA.